A 479-amino-acid polypeptide reads, in one-letter code: Glutamyl-tRNA(Gln) amidotransferase subunit A (479 aa).

Residues lysine 71 and serine 146 each act as charge relay system in the active site. Residue serine 170 is the Acyl-ester intermediate of the active site.

Belongs to the amidase family. GatA subfamily. In terms of assembly, heterotrimer of A, B and C subunits.

The catalysed reaction is L-glutamyl-tRNA(Gln) + L-glutamine + ATP + H2O = L-glutaminyl-tRNA(Gln) + L-glutamate + ADP + phosphate + H(+). Functionally, allows the formation of correctly charged Gln-tRNA(Gln) through the transamidation of misacylated Glu-tRNA(Gln) in organisms which lack glutaminyl-tRNA synthetase. The reaction takes place in the presence of glutamine and ATP through an activated gamma-phospho-Glu-tRNA(Gln). The chain is Glutamyl-tRNA(Gln) amidotransferase subunit A from Lactobacillus gasseri (strain ATCC 33323 / DSM 20243 / BCRC 14619 / CIP 102991 / JCM 1131 / KCTC 3163 / NCIMB 11718 / NCTC 13722 / AM63).